Consider the following 299-residue polypeptide: F-actin-capping protein subunit alpha-3 (299 aa).

Serine 290 carries the phosphoserine modification.

The protein belongs to the F-actin-capping protein alpha subunit family. In terms of assembly, component of the F-actin capping complex, composed of a heterodimer of an alpha and a beta subunit. Component of the WASH complex, composed of F-actin-capping protein subunit alpha (CAPZA1, CAPZA2 or CAPZA3), F-actin-capping protein subunit beta (CAPZB), WASHC1, WASHC2, WASHC3, WASHC4 and WASHC5.

In terms of biological role, F-actin-capping proteins bind in a Ca(2+)-independent manner to the fast growing ends of actin filaments (barbed end) thereby blocking the exchange of subunits at these ends. Unlike other capping proteins (such as gelsolin and severin), these proteins do not sever actin filaments. May play a role in the morphogenesis of spermatid. The polypeptide is F-actin-capping protein subunit alpha-3 (CAPZA3) (Macaca fascicularis (Crab-eating macaque)).